Consider the following 358-residue polypeptide: F-box protein At4g35733 (358 aa).

The F-box domain occupies 4–51 (ATVWSDLPGELLDHIANGLFSKVELLRFRSICKTFRSAVDSDKNFLDH).

In terms of assembly, part of a SCF (ASK-cullin-F-box) protein ligase complex.

It participates in protein modification; protein ubiquitination. In terms of biological role, component of SCF(ASK-cullin-F-box) E3 ubiquitin ligase complexes, which may mediate the ubiquitination and subsequent proteasomal degradation of target proteins. The protein is F-box protein At4g35733 of Arabidopsis thaliana (Mouse-ear cress).